The primary structure comprises 199 residues: MARCKS-related protein (199 aa).

Residues 1–199 (MGSQSSKAPR…GPASASAENE (199 aa)) form a disordered region. Glycine 2 carries N-myristoyl glycine lipidation. Threonine 14 carries the phosphothreonine modification. Over residues 16 to 26 (EEAAGASPAKA) the composition is skewed to low complexity. Residues serine 22, serine 36, and serine 48 each carry the phosphoserine modification. The segment covering 53-64 (GADEAAGATGDA) has biased composition (low complexity). Phosphoserine is present on serine 71. Basic and acidic residues predominate over residues 74-85 (AEAKGEVAPKET). At threonine 85 the chain carries Phosphothreonine. A compositionally biased stretch (basic residues) spans 86 to 98 (PKKKKKFSFKKPF). Positions 87 to 110 (KKKKKFSFKKPFKLSGLSFKRNRK) are effector domain involved in lipid-binding and calmodulin-binding. Phosphoserine; by PKC is present on residues serine 93, serine 101, and serine 104. At serine 119 the chain carries Phosphoserine. A Phosphoserine; by MAPK8 modification is found at serine 120. Phosphoserine is present on residues serine 132 and serine 135. Threonine 148 is subject to Phosphothreonine; by MAPK8. 3 positions are modified to phosphoserine: serine 151, serine 162, and serine 165. The segment covering 175-199 (GPQAAEPSTPSGPESGPASASAENE) has biased composition (low complexity). Threonine 183 bears the Phosphothreonine; by MAPK8 mark.

This sequence belongs to the MARCKS family. Binds to filamentous actin (F-actin), but not to monomeric G-actin, independently of its phosphorylation status. Interacts with calmodulin. Post-translationally, phosphorylated. Phosphorylation at Ser-120 and Thr-183 is non-redundantly catalyzed by MAPK8 in vivo. Phosphorylation at Thr-148 is preferentially catalyzed by MAPK8 in vivo, but this modification can also be catalyzed by other kinases in the absence of MAPK8. May be phosphorylated by protein kinase C, which disrupts the interaction with calmodulin.

The protein localises to the cytoplasm. It is found in the cytoskeleton. Its subcellular location is the cell membrane. In terms of biological role, controls cell movement by regulating actin cytoskeleton homeostasis and filopodium and lamellipodium formation. When unphosphorylated, induces cell migration. When phosphorylated by MAPK8, induces actin bundles formation and stabilization, thereby reducing actin plasticity, hence restricting cell movement, including neuronal migration. May be involved in coupling the protein kinase C and calmodulin signal transduction systems. In Rattus norvegicus (Rat), this protein is MARCKS-related protein (Marcksl1).